Here is an 89-residue protein sequence, read N- to C-terminus: MTPAELFGEGINLMLSGMGFVITFLLILIWAITTMSKLINRFFPEPVKQSKPSQKPTALSAAVQGNDLDRLRPVIVAAIAHHRRSQGLN.

Residues 13–33 traverse the membrane as a helical segment; it reads LMLSGMGFVITFLLILIWAIT.

This sequence belongs to the OadG family. In terms of assembly, heterotrimer of an alpha, a beta and a gamma subunit. The cofactor is Na(+).

Its subcellular location is the cell membrane. The enzyme catalyses oxaloacetate + 2 Na(+)(in) + H(+) = pyruvate + 2 Na(+)(out) + CO2. Functionally, catalyzes the decarboxylation of oxaloacetate coupled to Na(+) translocation. The protein is Probable oxaloacetate decarboxylase gamma chain of Actinobacillus succinogenes (strain ATCC 55618 / DSM 22257 / CCUG 43843 / 130Z).